The chain runs to 429 residues: Ribosomal RNA small subunit methyltransferase B (429 aa).

Residues C254–K260, D277, D303, and D322 each bind S-adenosyl-L-methionine. Catalysis depends on C375, which acts as the Nucleophile.

This sequence belongs to the class I-like SAM-binding methyltransferase superfamily. RsmB/NOP family.

The protein localises to the cytoplasm. It carries out the reaction cytidine(967) in 16S rRNA + S-adenosyl-L-methionine = 5-methylcytidine(967) in 16S rRNA + S-adenosyl-L-homocysteine + H(+). Functionally, specifically methylates the cytosine at position 967 (m5C967) of 16S rRNA. The protein is Ribosomal RNA small subunit methyltransferase B of Yersinia pseudotuberculosis serotype O:1b (strain IP 31758).